The primary structure comprises 193 residues: Large ribosomal subunit protein bL25 (193 aa).

It belongs to the bacterial ribosomal protein bL25 family. CTC subfamily. As to quaternary structure, part of the 50S ribosomal subunit; part of the 5S rRNA/L5/L18/L25 subcomplex. Contacts the 5S rRNA. Binds to the 5S rRNA independently of L5 and L18.

Functionally, this is one of the proteins that binds to the 5S RNA in the ribosome where it forms part of the central protuberance. This is Large ribosomal subunit protein bL25 from Oleidesulfovibrio alaskensis (strain ATCC BAA-1058 / DSM 17464 / G20) (Desulfovibrio alaskensis).